A 138-amino-acid polypeptide reads, in one-letter code: ATP synthase epsilon chain (138 aa).

The protein belongs to the ATPase epsilon chain family. F-type ATPases have 2 components, CF(1) - the catalytic core - and CF(0) - the membrane proton channel. CF(1) has five subunits: alpha(3), beta(3), gamma(1), delta(1), epsilon(1). CF(0) has three main subunits: a, b and c.

It localises to the cell inner membrane. Functionally, produces ATP from ADP in the presence of a proton gradient across the membrane. The sequence is that of ATP synthase epsilon chain from Psychrobacter sp. (strain PRwf-1).